Consider the following 422-residue polypeptide: F-box/kelch-repeat protein At3g27150 (422 aa).

An F-box domain is found at 68–114 (LLNVPQLVYELEVEILARVPRFEYWKLKLLNKGFSRLLKSDEIFKVR). Kelch repeat units lie at residues 162–212 (ESLC…TCGT), 213–264 (VVFV…YLRG), 266–312 (FYVL…SPPL), 314–361 (AVVG…VAFK), and 366–412 (KLLV…RFNH).

This Arabidopsis thaliana (Mouse-ear cress) protein is F-box/kelch-repeat protein At3g27150.